A 97-amino-acid polypeptide reads, in one-letter code: Defensin-like protein 246 (97 aa).

Residues 1 to 24 form the signal peptide; it reads MKFVAIFLVTCVLFSLFPSHLSQG. Cystine bridges form between Cys-39–Cys-96, Cys-50–Cys-79, Cys-58–Cys-89, and Cys-77–Cys-91.

It belongs to the DEFL family. As to expression, flower buds and stems.

Its subcellular location is the secreted. The protein is Defensin-like protein 246 (SCRL5) of Arabidopsis thaliana (Mouse-ear cress).